A 434-amino-acid polypeptide reads, in one-letter code: Ribonuclease T2-like (434 aa).

Residues 1–18 (MLLKNLHSLLQLPIFSNG) form the signal peptide. Cystine bridges form between Cys-27–Cys-46, Cys-35–Cys-94, Cys-45–Cys-171, Cys-102–Cys-163, and Cys-241–Cys-277. N-linked (GlcNAc...) asparagine glycans are attached at residues Asn-37 and Asn-70. Residue His-87 is part of the active site. 2 N-linked (GlcNAc...) asparagine glycosylation sites follow: Asn-103 and Asn-123. Residues Glu-156 and His-160 contribute to the active site.

Belongs to the RNase T2 family. Post-translationally, N-glycosylated.

It localises to the vacuole lumen. The protein localises to the cytoplasm. The enzyme catalyses a ribonucleotidyl-ribonucleotide-RNA + H2O = a 3'-end 3'-phospho-ribonucleotide-RNA + a 5'-end dephospho-ribonucleoside-RNA + H(+). In terms of biological role, rnase which modulates cell survival under stress conditions. Released from the vacuole to the cytoplasm during stress to promote tRNA and rRNA cleavage and to activate separately a downstream pathway that promotes cell death. Involved in cell size, vacuolar morphology and growth at high temperatures and high salt concentration. The sequence is that of Ribonuclease T2-like (RNY1) from Saccharomyces cerevisiae (strain ATCC 204508 / S288c) (Baker's yeast).